The sequence spans 759 residues: Phosphoribosylformylglycinamidine synthase subunit PurL (759 aa).

Residue histidine 61 is part of the active site. ATP is bound by residues tyrosine 64 and lysine 105. Glutamate 107 serves as a coordination point for Mg(2+). Substrate is bound by residues 108–111 and arginine 130; that span reads SHNH. The active-site Proton acceptor is histidine 109. Aspartate 131 is a binding site for Mg(2+). Glutamine 260 serves as a coordination point for substrate. Aspartate 288 provides a ligand contact to Mg(2+). 332–334 is a binding site for substrate; sequence ESQ. 2 residues coordinate ATP: aspartate 520 and glycine 557. Mg(2+) is bound at residue asparagine 558. Serine 560 contacts substrate.

This sequence belongs to the FGAMS family. In terms of assembly, monomer. Part of the FGAM synthase complex composed of 1 PurL, 1 PurQ and 2 PurS subunits.

It localises to the cytoplasm. The enzyme catalyses N(2)-formyl-N(1)-(5-phospho-beta-D-ribosyl)glycinamide + L-glutamine + ATP + H2O = 2-formamido-N(1)-(5-O-phospho-beta-D-ribosyl)acetamidine + L-glutamate + ADP + phosphate + H(+). It participates in purine metabolism; IMP biosynthesis via de novo pathway; 5-amino-1-(5-phospho-D-ribosyl)imidazole from N(2)-formyl-N(1)-(5-phospho-D-ribosyl)glycinamide: step 1/2. Part of the phosphoribosylformylglycinamidine synthase complex involved in the purines biosynthetic pathway. Catalyzes the ATP-dependent conversion of formylglycinamide ribonucleotide (FGAR) and glutamine to yield formylglycinamidine ribonucleotide (FGAM) and glutamate. The FGAM synthase complex is composed of three subunits. PurQ produces an ammonia molecule by converting glutamine to glutamate. PurL transfers the ammonia molecule to FGAR to form FGAM in an ATP-dependent manner. PurS interacts with PurQ and PurL and is thought to assist in the transfer of the ammonia molecule from PurQ to PurL. The chain is Phosphoribosylformylglycinamidine synthase subunit PurL from Thermoplasma volcanium (strain ATCC 51530 / DSM 4299 / JCM 9571 / NBRC 15438 / GSS1).